Reading from the N-terminus, the 224-residue chain is MKPQDLKLPYFWEDRCPKIENHVFYVPSYYPKYEEFVMPSWQNLFANEGPVCCELCSGNGDWVVEQALKDTSINWIAVEKRFDRVRKIWSKMSNHKVNNLLIVCGEAQTFFTHYVTDASFQKIVVNFPDPWPKFRHRKHRLFQDVFVQDMVRVLVEGGQLTLVTDDHTYLTNSIQVMLNYLSPGMQDPYYVNVKDNYGGSWFENLWRSKGEKIFCTEFVKRVGI.

4 residues coordinate S-adenosyl-L-methionine: E54, E79, E106, and D129. Residue D129 is part of the active site. The substrate site is built by K133 and D165.

This sequence belongs to the class I-like SAM-binding methyltransferase superfamily. TrmB family.

It carries out the reaction guanosine(46) in tRNA + S-adenosyl-L-methionine = N(7)-methylguanosine(46) in tRNA + S-adenosyl-L-homocysteine. The protein operates within tRNA modification; N(7)-methylguanine-tRNA biosynthesis. Catalyzes the formation of N(7)-methylguanine at position 46 (m7G46) in tRNA. In Chlamydia muridarum (strain MoPn / Nigg), this protein is tRNA (guanine-N(7)-)-methyltransferase.